Consider the following 930-residue polypeptide: MSQSPRFVTRRGGSLKAAPGAGTRRNESQDYLLMDELGDDGYPQLPLPPYGYYPSFRGNENRLTHRRQTILREKGRRLANRGPAYMFNDHSTSLSIEEERFLDAAEYGNIPVVRKMLEECHSLNVNCVDYMGQNALQLAVANEHLEITELLLKKENLSRVGDALLLAISKGYVRIVEAILNHPAFAEGKRLATSPSQSELQQDDFYAYDEDGTRFSHDVTPIILAAHCQEYEIVHTLLRKGARIERPHDYFCKCTECSQKQKHDSFSHSRSRINAYKGLASPAYLSLSSEDPVMTALELSNELAVLANIEKEFKNDYRKLSMQCKDFVVGLLDLCRNTEEVEAILNGDAETRQPGDFGRPNLSRLKLAIKYEVKKFVAHPNCQQQLLSIWYENLSGLRQQTMAVKFLVVLAVAIGLPFLALIYWCAPCSKMGKILRGPFMKFVAHAASFTIFLGLLVMNAADRFEGTKLLPNETSTDNARQLFRMKTSCFSWMEMLIISWVIGMIWAECKEIWTQGPKEYLFELWNMLDFGMLAIFAASFIARFMAFWHASKAQSIIDANDTLKDLTKVTLGDNVKYYNLARIKWDPTDPQIISEGLYAIAVVLSFSRIAYILPANESFGPLQISLGRTVKDIFKFMVIFIMVFVAFMIGMFNLYSYYIGAKQNEAFTTVEESFKTLFWAIFGLSEVKSVVINYNHKFIENIGYVLYGVYNVTMVIVLLNMLIAMINSSFQEIEDDADVEWKFARAKLWFSYFEEGRTLPVPFNLVPSPKSLLYLLLKFKKWMCELIQGQKQGFQEDAEMNKRNEEKKFGISGSHEDLSKFSLDKNQLAHNKQSSTRSSEDYHLNSFSNPPRQYQKIMKRLIKRYVLQAQIDKESDEVNEGELKEIKQDISSLRYELLEEKSQNTEDLAELIRKLGERLSLEPKLEESRR.

The segment at 1 to 27 (MSQSPRFVTRRGGSLKAAPGAGTRRNE) is disordered. The Cytoplasmic portion of the chain corresponds to 1–437 (MSQSPRFVTR…CSKMGKILRG (437 aa)). ANK repeat units follow at residues 96-125 (IEEE…SLNV), 131-160 (MGQN…LSRV), 162-188 (DALL…FAEG), and 217-246 (HDVT…RIER). The helical transmembrane segment at 438 to 458 (PFMKFVAHAASFTIFLGLLVM) threads the bilayer. Residues 459 to 486 (NAADRFEGTKLLPNETSTDNARQLFRMK) are Extracellular-facing. The helical transmembrane segment at 487–507 (TSCFSWMEMLIISWVIGMIWA) threads the bilayer. The Cytoplasmic portion of the chain corresponds to 508–520 (ECKEIWTQGPKEY). The chain crosses the membrane as a helical span at residues 521 to 541 (LFELWNMLDFGMLAIFAASFI). At 542-591 (ARFMAFWHASKAQSIIDANDTLKDLTKVTLGDNVKYYNLARIKWDPTDPQ) the chain is on the extracellular side. A glycan (N-linked (GlcNAc...) asparagine) is linked at asparagine 560. The helical transmembrane segment at 592–612 (IISEGLYAIAVVLSFSRIAYI) threads the bilayer. Over 613-635 (LPANESFGPLQISLGRTVKDIFK) the chain is Cytoplasmic. A helical membrane pass occupies residues 636–656 (FMVIFIMVFVAFMIGMFNLYS). Residues 657-705 (YYIGAKQNEAFTTVEESFKTLFWAIFGLSEVKSVVINYNHKFIENIGYV) lie on the Extracellular side of the membrane. The chain crosses the membrane as a helical span at residues 706-726 (LYGVYNVTMVIVLLNMLIAMI). The Cytoplasmic segment spans residues 727 to 930 (NSSFQEIEDD…LEPKLEESRR (204 aa)). Serine 814 is modified (phosphoserine).

It belongs to the transient receptor (TC 1.A.4) family. STrpC subfamily. TRPC6 sub-subfamily. As to quaternary structure, homodimer; forms channel complex. Interacts with MX1 and RNF24. Phosphorylated by FYN, leading to an increase of TRPC6 channel activity. In terms of processing, N-glycosylated. Lung and brain.

It is found in the cell membrane. The enzyme catalyses Ca(2+)(in) = Ca(2+)(out). Its function is as follows. Forms a receptor-activated non-selective calcium permeant cation channel. Probably is operated by a phosphatidylinositol second messenger system activated by receptor tyrosine kinases or G-protein coupled receptors. Activated by diacylglycerol (DAG) in a membrane-delimited fashion, independently of protein kinase C. Seems not to be activated by intracellular calcium store depletion. The polypeptide is Short transient receptor potential channel 6 (Mus musculus (Mouse)).